The following is a 64-amino-acid chain: Cecropin-A (64 aa).

Residues 1 to 22 (MNFSRIFFFVFACLTALAMVNA) form the signal peptide. The propeptide at 23–26 (APEP) is removed by a dipeptidylpeptidase. A Lysine amide modification is found at Lys63.

This sequence belongs to the cecropin family. A protein with the same sequence as cecropin A, but lacking the carboxyl blocking group, has been isolated and called cecropin C.

It is found in the secreted. Functionally, cecropins have lytic and antibacterial activity against several Gram-positive and Gram-negative bacteria. The sequence is that of Cecropin-A from Hyalophora cecropia (Cecropia moth).